The primary structure comprises 159 residues: Endoribonuclease YbeY (159 aa).

Zn(2+) contacts are provided by His-123, His-127, and His-133.

This sequence belongs to the endoribonuclease YbeY family. It depends on Zn(2+) as a cofactor.

The protein resides in the cytoplasm. Its function is as follows. Single strand-specific metallo-endoribonuclease involved in late-stage 70S ribosome quality control and in maturation of the 3' terminus of the 16S rRNA. The chain is Endoribonuclease YbeY from Bacillus pumilus (strain SAFR-032).